A 272-amino-acid chain; its full sequence is NAD kinase (272 aa).

The Proton acceptor role is filled by Asp-50. NAD(+) contacts are provided by residues 50–51 (DG), 126–127 (NE), Arg-152, Asp-154, 165–170 (TAYNKS), and Ala-189.

It belongs to the NAD kinase family. Requires a divalent metal cation as cofactor.

The protein resides in the cytoplasm. It carries out the reaction NAD(+) + ATP = ADP + NADP(+) + H(+). Involved in the regulation of the intracellular balance of NAD and NADP, and is a key enzyme in the biosynthesis of NADP. Catalyzes specifically the phosphorylation on 2'-hydroxyl of the adenosine moiety of NAD to yield NADP. This Streptococcus pneumoniae serotype 19F (strain G54) protein is NAD kinase.